The chain runs to 87 residues: Putative regulatory protein BCG9842_B1272 (87 aa).

This sequence belongs to the RemA family.

This chain is Putative regulatory protein BCG9842_B1272, found in Bacillus cereus (strain G9842).